A 249-amino-acid polypeptide reads, in one-letter code: NAD(P)H-hydrate epimerase (249 aa).

The 223-residue stretch at 11–233 (AQQIDVELMS…ELGKKHELNI (223 aa)) folds into the YjeF N-terminal domain. (6S)-NADPHX is bound at residue 62–66 (NQGGD). K(+) contacts are provided by Q63 and D127. (6S)-NADPHX-binding positions include 131-137 (GFSFQPP) and D162. S165 lines the K(+) pocket.

This sequence belongs to the NnrE/AIBP family. The cofactor is K(+).

The protein localises to the cytoplasm. Its subcellular location is the mitochondrion. It carries out the reaction (6R)-NADHX = (6S)-NADHX. The enzyme catalyses (6R)-NADPHX = (6S)-NADPHX. Its function is as follows. Catalyzes the epimerization of the S- and R-forms of NAD(P)HX, a damaged form of NAD(P)H that is a result of enzymatic or heat-dependent hydration. This is a prerequisite for the S-specific NAD(P)H-hydrate dehydratase to allow the repair of both epimers of NAD(P)HX. The polypeptide is NAD(P)H-hydrate epimerase (Cryptococcus neoformans var. neoformans serotype D (strain JEC21 / ATCC MYA-565) (Filobasidiella neoformans)).